Here is a 243-residue protein sequence, read N- to C-terminus: MKIDFLTLFPEMFQGVLGSSILQKAQEKEAVRFDVINFRAFSDNKHQTVDDYPYGGGAGMVLKPQPVFDAVEKLTAGTDAKPRIILVCPQGERYTQKKAEELAQEEHLMFICGHYEGYDERIREHLVTDEISIGDFVLTGGELPAMMIADSVVRLLPGVLGKEASHVEDSFSTGLLEHPHYTRPADYRGLKVPETLLSGNHAKIQKWRNKESIRRTFLRRPDLLKNYPLTDEQRKWISEWENE.

S-adenosyl-L-methionine is bound by residues G113 and 133–138 (IGDFVL).

This sequence belongs to the RNA methyltransferase TrmD family. As to quaternary structure, homodimer.

Its subcellular location is the cytoplasm. The catalysed reaction is guanosine(37) in tRNA + S-adenosyl-L-methionine = N(1)-methylguanosine(37) in tRNA + S-adenosyl-L-homocysteine + H(+). In terms of biological role, specifically methylates guanosine-37 in various tRNAs. The chain is tRNA (guanine-N(1)-)-methyltransferase from Bacillus velezensis (strain DSM 23117 / BGSC 10A6 / LMG 26770 / FZB42) (Bacillus amyloliquefaciens subsp. plantarum).